The following is a 298-amino-acid chain: uncharacterized protein (298 aa).

This is an uncharacterized protein from Ictalurid herpesvirus 1 (strain Auburn) (IcHV-1).